We begin with the raw amino-acid sequence, 454 residues long: Phosphoglucosamine mutase (454 aa).

The Phosphoserine intermediate role is filled by serine 102. Mg(2+)-binding residues include serine 102, aspartate 247, aspartate 249, and aspartate 251. The residue at position 102 (serine 102) is a Phosphoserine.

Belongs to the phosphohexose mutase family. Requires Mg(2+) as cofactor. In terms of processing, activated by phosphorylation.

It catalyses the reaction alpha-D-glucosamine 1-phosphate = D-glucosamine 6-phosphate. Functionally, catalyzes the conversion of glucosamine-6-phosphate to glucosamine-1-phosphate. This Kineococcus radiotolerans (strain ATCC BAA-149 / DSM 14245 / SRS30216) protein is Phosphoglucosamine mutase.